Reading from the N-terminus, the 496-residue chain is Aldehyde dehydrogenase (496 aa).

Catalysis depends on residues Glu-263 and Cys-296.

The protein belongs to the aldehyde dehydrogenase family.

The protein resides in the cytoplasm. It catalyses the reaction an aldehyde + NAD(+) + H2O = a carboxylate + NADH + 2 H(+). This Davidiella tassiana (Mycosphaerella tassiana) protein is Aldehyde dehydrogenase (CLAH10).